A 65-amino-acid polypeptide reads, in one-letter code: Large ribosomal subunit protein bL35 (65 aa).

It belongs to the bacterial ribosomal protein bL35 family.

The chain is Large ribosomal subunit protein bL35 from Clostridium acetobutylicum (strain ATCC 824 / DSM 792 / JCM 1419 / IAM 19013 / LMG 5710 / NBRC 13948 / NRRL B-527 / VKM B-1787 / 2291 / W).